A 1810-amino-acid polypeptide reads, in one-letter code: Trinucleotide repeat-containing gene 6B protein (1810 aa).

The span at 1–22 (MQTNEGEVEEESSSQVEQEDFV) shows a compositional bias: acidic residues. Disordered regions lie at residues 1 to 221 (MQTN…PNPI), 235 to 1080 (EEWP…KKQM), 1141 to 1196 (MRKD…SSPG), and 1293 to 1329 (ALQQ…NMVP). A coiled-coil region spans residues 33 to 75 (GEESKQEKEQEREEQLMEDKKRKKEDKKKKEATQKVTEQKTKV). 2 stretches are compositionally biased toward basic and acidic residues: residues 34 to 52 (EESK…MEDK) and 60 to 77 (KKKE…KVPE). An interaction with argonaute proteins region spans residues 37 to 1028 (KQEKEQEREE…AMKPNSKSMQ (992 aa)). Residues 88–106 (AASPIGSSPSPPVNGGNNA) show a composition bias toward low complexity. Basic and acidic residues predominate over residues 123–139 (MPREVPPRFRCQQDHKV). The segment covering 165–174 (APGANPNNNA) has biased composition (low complexity). Residues 180 to 190 (LLQSESGTAPE) are compositionally biased toward polar residues. 2 stretches are compositionally biased toward low complexity: residues 207–220 (GPGA…SPNP) and 248–260 (SSEN…SASN). Polar residues-rich tracts occupy residues 261–290 (PGSE…SGNE) and 306–327 (QPPN…TSGQ). Composition is skewed to low complexity over residues 335–346 (GFSNFNPNSNPS), 363–380 (ETES…GQAS), and 416–425 (NSLNLSSPNP). Residues 438 to 451 (GNTSRSTDAPSQST) show a composition bias toward polar residues. A compositionally biased stretch (low complexity) spans 475–486 (SGQSNSGNNGNN). Composition is skewed to polar residues over residues 504 to 528 (GSKS…PQDN), 564 to 575 (GPNQPNSSTGAW), 611 to 623 (TGSN…SDSH), and 655 to 667 (LSNT…QIKQ). Positions 675–688 (EVPRPEGKSDKGTE) are enriched in basic and acidic residues. Polar residues-rich tracts occupy residues 774–783 (QPNQGWTSGK) and 793–804 (VKNNNWESSANK). Residues 809-824 (WGEGGQNEIGTWGNGG) are compositionally biased toward gly residues. Residues 846–857 (TGRQPNSWNKQH) show a composition bias toward polar residues. At Ser-913 the chain carries Phosphoserine. Composition is skewed to polar residues over residues 934-950 (NSYN…NSQG), 964-975 (TGKSASVWSKST), 1004-1027 (ASTT…SKSM), 1057-1072 (TAGS…SASW), and 1175-1195 (GNST…SSSP). The interval 1191 to 1700 (LSSSPGLRAQ…LAEFATEDEV (510 aa)) is silencing domain; interaction with CNOT1 and PAN3. Over residues 1295 to 1307 (QQQQQQQQQQQRQ) the composition is skewed to low complexity. Ser-1409 carries the post-translational modification Phosphoserine. The residue at position 1426 (Thr-1426) is a Phosphothreonine. Ser-1438 is subject to Phosphoserine. The residue at position 1441 (Thr-1441) is a Phosphothreonine. Residues 1449-1467 (SNASWPPEFQPGVPWKGIQ) form a PABPC1-interacting motif-2 (PAM2) region. Residues 1568-1619 (SSRNTTPLTRPPPGLTNPKPASPWSSTAPRSVRGWGTQDSRIASASTWSDGG) are disordered. Residues 1604–1617 (TQDSRIASASTWSD) show a composition bias toward polar residues. The region spanning 1625-1697 (YWLVLHNLTP…TTILAEFATE (73 aa)) is the RRM domain. Disordered regions lie at residues 1706-1740 (QAQP…GPAL) and 1786-1810 (EDPH…SDSI). Residues 1722–1733 (GWQSLETSQNQA) show a composition bias toward polar residues. Low complexity predominate over residues 1792-1801 (GSPAPLLPGD). Phosphoserine is present on residues Ser-1793 and Ser-1809.

Belongs to the GW182 family. Interacts with AGO1, AGO2, AGO3 and AGO4. Interacts with CNOT1; the interaction mediates the association with the CCR4-NOT complex. Interacts with PAN3; the interaction mediates the association with the PAN complex. Interacts with MOV10; the interaction is direct and RNA-dependent.

The protein localises to the cytoplasm. The protein resides in the P-body. Plays a role in RNA-mediated gene silencing by both micro-RNAs (miRNAs) and short interfering RNAs (siRNAs). Required for miRNA-dependent translational repression and siRNA-dependent endonucleolytic cleavage of complementary mRNAs by argonaute family proteins. As scaffolding protein associates with argonaute proteins bound to partially complementary mRNAs and simultaneously can recruit CCR4-NOT and PAN deadenylase complexes. The polypeptide is Trinucleotide repeat-containing gene 6B protein (Tnrc6b) (Mus musculus (Mouse)).